Reading from the N-terminus, the 597-residue chain is Blastula protease 10 (597 aa).

An N-terminal signal peptide occupies residues 1 to 16; sequence MKLILFLSGLVSLVLC. The propeptide at 17-93 is activation peptide; the sequence is TLAAPTGDQK…DEMTGRKKRK (77 aa). Residues 24–67 form a disordered region; that stretch reads DQKEIHTETPPPKKPSETTTPGALKTPQPEPKDEEPTPGAFQGD. Residues 93–294 enclose the Peptidase M12A domain; it reads KATIYESQRW…ELANLIYECD (202 aa). Disulfide bonds link C134–C293, C162–C182, C299–C315, C305–C317, C319–C328, C339–C365, C392–C412, C484–C510, and C537–C557. H190 contributes to the Zn(2+) binding site. E191 is a catalytic residue. The Zn(2+) site is built by H194 and H200. Residues 295–329 form the EGF-like domain; it reads DIEDCAGANECLNGGYHDTECNCVCPSGYNGDLCE. CUB domains are found at residues 339–449 and 484–595; these read CSER…YRIV and CGGS…YRAI.

Requires Zn(2+) as cofactor.

The protein localises to the cytoplasm. It is found in the perinuclear region. The protein resides in the cell cortex. It localises to the secreted. Its subcellular location is the extracellular space. In terms of biological role, could be involved in the differentiation of ectodermal lineages and subsequent patterning of the embryo. This chain is Blastula protease 10 (BP10), found in Paracentrotus lividus (Common sea urchin).